The sequence spans 490 residues: Betaine aldehyde dehydrogenase (490 aa).

Aspartate 93 is a K(+) binding site. NAD(+) is bound at residue 150-152 (GAW). The Charge relay system role is filled by lysine 162. 176 to 179 (KPSE) contributes to the NAD(+) binding site. Valine 180 is a binding site for K(+). 230 to 233 (GIAS) contributes to the NAD(+) binding site. Leucine 246 is a K(+) binding site. Glutamate 252 acts as the Proton acceptor in catalysis. Glycine 254, cysteine 286, and glutamate 387 together coordinate NAD(+). Catalysis depends on cysteine 286, which acts as the Nucleophile. Cysteine 286 bears the Cysteine sulfenic acid (-SOH) mark. Positions 457 and 460 each coordinate K(+). Glutamate 464 acts as the Charge relay system in catalysis.

This sequence belongs to the aldehyde dehydrogenase family. In terms of assembly, dimer of dimers. The cofactor is K(+).

The enzyme catalyses betaine aldehyde + NAD(+) + H2O = glycine betaine + NADH + 2 H(+). It participates in amine and polyamine biosynthesis; betaine biosynthesis via choline pathway; betaine from betaine aldehyde: step 1/1. Its function is as follows. Involved in the biosynthesis of the osmoprotectant glycine betaine. Catalyzes the irreversible oxidation of betaine aldehyde to the corresponding acid. The sequence is that of Betaine aldehyde dehydrogenase from Yersinia pseudotuberculosis serotype I (strain IP32953).